A 257-amino-acid polypeptide reads, in one-letter code: Receptor expression-enhancing protein 4 (257 aa).

A run of 2 helical transmembrane segments spans residues Met1 to Tyr21 and Trp42 to Phe62. Ser152 and Ser194 each carry phosphoserine. The segment at Ile159–Ser257 is disordered. Thr196 carries the post-translational modification Phosphothreonine. Ser202 is modified (phosphoserine). A Phosphothreonine modification is found at Thr250. Phosphoserine is present on Ser253.

Belongs to the DP1 family.

It is found in the endoplasmic reticulum membrane. Its function is as follows. Microtubule-binding protein required to ensure proper cell division and nuclear envelope reassembly by sequestering the endoplasmic reticulum away from chromosomes during mitosis. Probably acts by clearing the endoplasmic reticulum membrane from metaphase chromosomes. This chain is Receptor expression-enhancing protein 4 (Reep4), found in Rattus norvegicus (Rat).